The following is a 735-amino-acid chain: Phosphoribosylformylglycinamidine synthase subunit PurL (735 aa).

The active site involves H49. 2 residues coordinate ATP: Y52 and K91. E93 serves as a coordination point for Mg(2+). Residues 94–97 and R116 contribute to the substrate site; that span reads SHNH. H95 acts as the Proton acceptor in catalysis. D117 serves as a coordination point for Mg(2+). Residue Q240 coordinates substrate. D268 serves as a coordination point for Mg(2+). Residue 312–314 participates in substrate binding; it reads ESQ. Positions 493 and 530 each coordinate ATP. Position 531 (N531) interacts with Mg(2+). S533 lines the substrate pocket.

It belongs to the FGAMS family. In terms of assembly, monomer. Part of the FGAM synthase complex composed of 1 PurL, 1 PurQ and 2 PurS subunits.

The protein localises to the cytoplasm. The catalysed reaction is N(2)-formyl-N(1)-(5-phospho-beta-D-ribosyl)glycinamide + L-glutamine + ATP + H2O = 2-formamido-N(1)-(5-O-phospho-beta-D-ribosyl)acetamidine + L-glutamate + ADP + phosphate + H(+). It functions in the pathway purine metabolism; IMP biosynthesis via de novo pathway; 5-amino-1-(5-phospho-D-ribosyl)imidazole from N(2)-formyl-N(1)-(5-phospho-D-ribosyl)glycinamide: step 1/2. Part of the phosphoribosylformylglycinamidine synthase complex involved in the purines biosynthetic pathway. Catalyzes the ATP-dependent conversion of formylglycinamide ribonucleotide (FGAR) and glutamine to yield formylglycinamidine ribonucleotide (FGAM) and glutamate. The FGAM synthase complex is composed of three subunits. PurQ produces an ammonia molecule by converting glutamine to glutamate. PurL transfers the ammonia molecule to FGAR to form FGAM in an ATP-dependent manner. PurS interacts with PurQ and PurL and is thought to assist in the transfer of the ammonia molecule from PurQ to PurL. The chain is Phosphoribosylformylglycinamidine synthase subunit PurL from Methylocella silvestris (strain DSM 15510 / CIP 108128 / LMG 27833 / NCIMB 13906 / BL2).